The following is a 145-amino-acid chain: Flagellar assembly factor FliW (145 aa).

This sequence belongs to the FliW family. As to quaternary structure, interacts with translational regulator CsrA and flagellin(s).

The protein resides in the cytoplasm. Acts as an anti-CsrA protein, binds CsrA and prevents it from repressing translation of its target genes, one of which is flagellin. Binds to flagellin and participates in the assembly of the flagellum. The polypeptide is Flagellar assembly factor FliW (Anoxybacillus flavithermus (strain DSM 21510 / WK1)).